Consider the following 327-residue polypeptide: T-cell surface glycoprotein CD1a (327 aa).

Residues 1–16 form the signal peptide; the sequence is MLFLLLPLLAVLPGDG. At 17 to 300 the chain is on the extracellular side; the sequence is NADGLKEPLS…VLYWEHHSSV (284 aa). N37, N60, and N74 each carry an N-linked (GlcNAc...) asparagine glycan. 90–94 serves as a coordination point for a D-galactosylceramide; sequence RTIRS. Cystine bridges form between C119–C183 and C223–C278. Residue N145 is glycosylated (N-linked (GlcNAc...) asparagine). E171 and T175 together coordinate a D-galactosylceramide. Residues 184 to 291 enclose the Ig-like domain; the sequence is PRFILGLLDA…HSSLEGQDIV (108 aa). Residues 301-321 traverse the membrane as a helical segment; sequence GFIILAVIVPLLLLIGLALWF. Residues 322–327 lie on the Cytoplasmic side of the membrane; it reads RKRCFC.

Heterodimer with B2M (beta-2-microglobulin). Interacts with CD74. As to expression, expressed on cortical thymocytes, epidermal Langerhans cells, dendritic cells, on certain T-cell leukemias, and in various other tissues.

Its subcellular location is the cell membrane. It is found in the membrane raft. It localises to the endosome membrane. In terms of biological role, antigen-presenting protein that binds self and non-self lipid and glycolipid antigens and presents them to T-cell receptors on natural killer T-cells. This is T-cell surface glycoprotein CD1a (CD1A) from Homo sapiens (Human).